The following is a 635-amino-acid chain: Sodium- and chloride-dependent transporter XTRP3B (635 aa).

Residues 1 to 38 (MESPSAHAVSLPEDEELQPWGGAGGPGQHPGRPRSTEC) are disordered. Residues 1–56 (MESPSAHAVSLPEDEELQPWGGAGGPGQHPGRPRSTECAHPGVVEKVRPKWDNPLQ) lie on the Cytoplasmic side of the membrane. Residues 57-77 (FLLVCISYAVGLGNVWRFPYL) form a helical membrane-spanning segment. The Extracellular segment spans residues 78 to 85 (CQMYGGGN). Residues 86–106 (FLVPYIIMLIVEGMPLLYLEL) traverse the membrane as a helical segment. The Cytoplasmic segment spans residues 107-127 (AVGQRMRQGSIGAWRTISPYL). The chain crosses the membrane as a helical span at residues 128–148 (SGVGIASLVVSFLASVYFNVI). Residues 149–208 (NTWALWYLFHSFQDPLPWSVCPLNSNHTGYDEECEKASSTQYFWYRKTLNISPSIQENGG) are Extracellular-facing. An N-linked (GlcNAc...) asparagine glycan is attached at Asn174. Residues 209 to 229 (VQWEPALCLTLAWLMVYLCIL) traverse the membrane as a helical segment. The Cytoplasmic segment spans residues 230 to 237 (RGTESTGK). Residues 238-258 (VVYFTTSLPYFVLIIYLVRGL) form a helical membrane-spanning segment. Residues 259–284 (TLHGATNGLAYMFTPKIEQLANPKAW) lie on the Extracellular side of the membrane. Residues 285–305 (INAATQIFFSLGLGCGGLIAF) form a helical membrane-spanning segment. Topologically, residues 306–319 (ASYNEPSNDCQKHA) are cytoplasmic. The helical transmembrane segment at 320–340 (LIVSVINSTTAIFSSIVTFSI) threads the bilayer. Residues 341-432 (YGFKATFNYE…EAIKNMEVSQ (92 aa)) are Extracellular-facing. Residue Asn400 is glycosylated (N-linked (GlcNAc...) asparagine). A helical membrane pass occupies residues 433 to 453 (LWSVLYFFMLLTLGMGSMVGT). At 454–474 (GTAILTPLTDSKIISSYLPKE) the chain is on the cytoplasmic side. Residues 475–495 (AISGLVCLLNCAIGMVFTMEA) form a helical membrane-spanning segment. Topologically, residues 496 to 508 (GNYWFDLFNDYTA) are extracellular. The helical transmembrane segment at 509-529 (TLSLLLIVLVETIAVCYVYGL) threads the bilayer. Residues 530–547 (KRFESDLRAMTGRTLSWY) are Cytoplasmic-facing. Residues 548–568 (WKVMWAFVSPLLIVGLFIFYL) traverse the membrane as a helical segment. Over 569 to 597 (SDYILTGTLQYQAWDATQGHVVTKDYPTY) the chain is Extracellular. Residues 598 to 618 (ALAVIGLLVASSTMCIPLVAL) traverse the membrane as a helical segment. Residues 619-635 (GTFVTRHFKIREQFSAA) lie on the Cytoplasmic side of the membrane.

The protein belongs to the sodium:neurotransmitter symporter (SNF) (TC 2.A.22) family. SLC6A20 subfamily. As to quaternary structure, interacts with CLTRN. In terms of tissue distribution, detected only in kidney and lung.

It is found in the apical cell membrane. In terms of biological role, does not show transporter activity with a range of tested amino acids including proline, glutamine, glutamic acid, leucine, alanine, histidine, glycine and arginine. The sequence is that of Sodium- and chloride-dependent transporter XTRP3B (Slc6a20b) from Mus musculus (Mouse).